The chain runs to 441 residues: MQLYNSLSKTKKTLNKKTINLYCCGPTVYNYIHIGNARPILLVDVLIRYLKSRSIKVNYLQNITDIDDKIILKALENNLNELEVSQKYTSAYLEDLKSLNINQPDKIILISQKMNEMIDFIKNLVDINAAYVLDGDVYFDIKKYENEYCKLSGYKLDELISGKRVEIDSKKHYSLDFSLWKKTDIGIKWDSVFGLGRPGWHTECVLLIDEYFNHQTIDIHVGGIDLKFPHHENERIQFIAKNNKELAHIWLHNGHLQINDEKMSKSLGNVILVRDFIKKHNKNTLRWIFLTTNYTQPLNISDDLIYQANKFFEKLTNLSKKTIQFIIKKDLKIKSINSSEYINKFNEYMEDDLNTSLVLSLIDLLIKQINKNIVDKNLDNFNLLIGSLNYILDVLGFDNVFNYKFDNKTKELFLKWQELVKNKEFNKADLIRNKLIEQGIL.

C24 contributes to the Zn(2+) binding site. Residues 26–36 carry the 'HIGH' region motif; it reads PTVYNYIHIGN. Zn(2+) contacts are provided by C204, H230, and E234. The 'KMSKS' region motif lies at 262 to 266; it reads KMSKS. K265 lines the ATP pocket.

This sequence belongs to the class-I aminoacyl-tRNA synthetase family. As to quaternary structure, monomer. The cofactor is Zn(2+).

Its subcellular location is the cytoplasm. It catalyses the reaction tRNA(Cys) + L-cysteine + ATP = L-cysteinyl-tRNA(Cys) + AMP + diphosphate. The sequence is that of Cysteine--tRNA ligase from Mycoplasma mycoides subsp. mycoides SC (strain CCUG 32753 / NCTC 10114 / PG1).